The primary structure comprises 329 residues: Cuticle collagen 6 (329 aa).

Triple-helical region regions lie at residues G142 to D171, G189 to P212, G216 to L248, G253 to S279, and G282 to C320. Positions P146 to Y329 are disordered. The segment covering D156–E173 has biased composition (basic and acidic residues). Positions P187–P199 are enriched in low complexity. Pro residues predominate over residues K200–P212. Positions V251 to N272 are enriched in pro residues. Over residues P273–G282 the composition is skewed to low complexity. Over residues C320–Y329 the composition is skewed to pro residues.

Belongs to the cuticular collagen family. Collagen polypeptide chains are complexed within the cuticle by disulfide bonds and other types of covalent cross-links.

Nematode cuticles are composed largely of collagen-like proteins. The cuticle functions both as an exoskeleton and as a barrier to protect the worm from its environment. In Caenorhabditis elegans, this protein is Cuticle collagen 6.